The chain runs to 216 residues: Flagellin B2 (216 aa).

Positions 1-12 (MKIKEFMSNKKG) are excised as a propeptide. Residues Asn38, Asn72, Asn77, Asn113, Asn172, and Asn208 are each glycosylated (N-linked (GlcNAc...) asparagine).

This sequence belongs to the archaeal flagellin family. Post-translationally, N-linked glycans consist of the 779 Da trisaccharide beta-ManNAc(Thr)-(1-4)-beta-GlcNAc3NAcA-(1-3)-beta-GlcNAc.

It is found in the archaeal flagellum. Functionally, flagellin is the subunit protein which polymerizes to form the filaments of archaeal flagella. This is Flagellin B2 (flaB2) from Methanococcus voltae.